The following is a 298-amino-acid chain: Pyridoxal 5'-phosphate synthase subunit PdxS (298 aa).

Asp-24 is a D-ribose 5-phosphate binding site. The active-site Schiff-base intermediate with D-ribose 5-phosphate is Lys-81. Gly-153 contacts D-ribose 5-phosphate. Arg-165 contributes to the D-glyceraldehyde 3-phosphate binding site. D-ribose 5-phosphate is bound by residues Gly-214 and 235 to 236; that span reads GS.

The protein belongs to the PdxS/SNZ family. As to quaternary structure, in the presence of PdxT, forms a dodecamer of heterodimers.

The enzyme catalyses aldehydo-D-ribose 5-phosphate + D-glyceraldehyde 3-phosphate + L-glutamine = pyridoxal 5'-phosphate + L-glutamate + phosphate + 3 H2O + H(+). The protein operates within cofactor biosynthesis; pyridoxal 5'-phosphate biosynthesis. Catalyzes the formation of pyridoxal 5'-phosphate from ribose 5-phosphate (RBP), glyceraldehyde 3-phosphate (G3P) and ammonia. The ammonia is provided by the PdxT subunit. Can also use ribulose 5-phosphate and dihydroxyacetone phosphate as substrates, resulting from enzyme-catalyzed isomerization of RBP and G3P, respectively. The sequence is that of Pyridoxal 5'-phosphate synthase subunit PdxS from Halalkalibacterium halodurans (strain ATCC BAA-125 / DSM 18197 / FERM 7344 / JCM 9153 / C-125) (Bacillus halodurans).